The chain runs to 458 residues: Exodeoxyribonuclease 7 large subunit (458 aa).

Belongs to the XseA family. As to quaternary structure, heterooligomer composed of large and small subunits.

It is found in the cytoplasm. The enzyme catalyses Exonucleolytic cleavage in either 5'- to 3'- or 3'- to 5'-direction to yield nucleoside 5'-phosphates.. In terms of biological role, bidirectionally degrades single-stranded DNA into large acid-insoluble oligonucleotides, which are then degraded further into small acid-soluble oligonucleotides. In Escherichia coli (strain UTI89 / UPEC), this protein is Exodeoxyribonuclease 7 large subunit.